Here is a 437-residue protein sequence, read N- to C-terminus: Transcription factor 12 (437 aa).

Disordered regions lie at residues 1–68, 80–123, and 244–335; these read EFHD…QTGD, PDHT…YENS, and ASNT…ERRM. Polar residues predominate over residues 13 to 37; the sequence is VSPTDISTSLPPMSSFHRGSTSSSP. Residue Thr44 is modified to Phosphothreonine. Ser64 carries the phosphoserine modification. The segment covering 83 to 94 has biased composition (low complexity); that stretch reads TSSSFPSNPSTP. Polar residues-rich tracts occupy residues 95–107 and 114–123; these read VGSP…TSQW and APSSPSYENS. 2 stretches are compositionally biased toward basic and acidic residues: residues 273–285 and 291–306; these read IKTE…ENLH and DDMK…DIKV. A Glycyl lysine isopeptide (Lys-Gly) (interchain with G-Cter in SUMO2) cross-link involves residue Lys274. Position 295 is a phosphoserine (Ser295). Residue Lys305 forms a Glycyl lysine isopeptide (Lys-Gly) (interchain with G-Cter in SUMO2) linkage. Phosphothreonine is present on Thr312. Phosphoserine occurs at positions 313 and 314. Residues 323–335 show a composition bias toward basic and acidic residues; sequence PEQKIEREKERRM. In terms of domain architecture, bHLH spans 332–385; the sequence is ERRMANNARERLRVRDINEAFKELGRMCQLHLKSEKPQTKLLILHQAVAVILSL. Glycyl lysine isopeptide (Lys-Gly) (interchain with G-Cter in SUMO2) cross-links involve residues Lys364 and Lys408. Residues 387–410 are class A specific domain; that stretch reads QQVRERNLNPKAACLKRREEEKVS. A disordered region spans residues 405 to 437; that stretch reads EEEKVSAASAEPPTTLPGTHPGLSETTNPMGHL. Low complexity predominate over residues 416–427; the sequence is PPTTLPGTHPGL. Residues 428–437 show a composition bias toward polar residues; it reads SETTNPMGHL.

Efficient DNA binding requires dimerization with another bHLH protein. Forms homo- or heterooligomers with myogenin, E12 and ITF2 proteins. Interacts with NEUROD2. Interacts with PTF1A. Interacts with RUNX1T1. Interacts with BHLHA9.

The protein resides in the nucleus. Transcriptional regulator. Involved in the initiation of neuronal differentiation. Activates transcription by binding to the E box (5'-CANNTG-3'). Participates in the control of inducible RP4 gene expression in salivary cells. Binds to the RIPE3 element of the insulin II promoter. May be involved in the functional network that regulates the development of the GnRH axis. This is Transcription factor 12 (TCF12) from Mesocricetus auratus (Golden hamster).